A 228-amino-acid chain; its full sequence is Small ribosomal subunit protein uS2 (228 aa).

This sequence belongs to the universal ribosomal protein uS2 family.

The chain is Small ribosomal subunit protein uS2 from Buchnera aphidicola subsp. Baizongia pistaciae (strain Bp).